The following is a 147-amino-acid chain: UPF0735 ACT domain-containing protein Cthe_1377 (147 aa).

The ACT domain occupies T71–R146.

Belongs to the UPF0735 family.

The polypeptide is UPF0735 ACT domain-containing protein Cthe_1377 (Acetivibrio thermocellus (strain ATCC 27405 / DSM 1237 / JCM 9322 / NBRC 103400 / NCIMB 10682 / NRRL B-4536 / VPI 7372) (Clostridium thermocellum)).